Consider the following 275-residue polypeptide: MQNHVISLASAAERRAHIADTFGRHGIPFQFFDALMPSERLEQAMAELVPGLSAHPYLSGVEKACFMSHAVLWKQALDEGLPYITVFEDDVLLGEGAEKFLAEDAWLQERFDPDTAFIVRLETMFMHVLTSPSGVADYCGRAFPLLESEHWGTAGYIISRKAMRFFLDRFAALPPEGLHPVDLMMFSDFFDREGMPVCQLNPALCAQELHYAKFHDQNSALGSLIEHDRLLNRKQQRRDSPANTFKHRLIRALTKISREREKRRQRREQFIVPFQ.

It belongs to the glycosyltransferase 25 family.

It functions in the pathway glycan metabolism; lacto-N-neotetraose biosynthesis. The protein operates within bacterial outer membrane biogenesis; lipooligosaccharide biosynthesis. Its function is as follows. Adds the second galactose to the lacto-N-tetraose chain in lipooligosaccharide (LOS). The protein is Lacto-N-neotetraose biosynthesis glycosyltransferase LgtB (lgtB) of Neisseria meningitidis serogroup B (strain ATCC BAA-335 / MC58).